A 773-amino-acid polypeptide reads, in one-letter code: Carnitine O-palmitoyltransferase 1, liver isoform (773 aa).

Position 2 is an N-acetylalanine (Ala-2). Over 2–47 (AEAHQAVAFQFTVTPDGIDLRLSHEALRQIYLSGLHSWKKKFIRFK) the chain is Cytoplasmic. The helical transmembrane segment at 48–73 (NGIITGVYPASPSSWLIVVVGVMTTM) threads the bilayer. The Mitochondrial intermembrane portion of the chain corresponds to 74–102 (YAKIDPSLGIIAKINRTLETANCMSSQTK). A helical membrane pass occupies residues 103 to 122 (NVVSGVLFGTGLWVALIVTM). Residues 123–773 (RYSLKVLLSY…LFGLSSNSKK (651 aa)) lie on the Cytoplasmic side of the membrane. 3'-nitrotyrosine is present on Tyr-282. His-473 acts as the Proton acceptor in catalysis. 555 to 567 (GKGIIKKCRTSPD) contacts CoA. Phosphothreonine is present on Thr-588. A 3'-nitrotyrosine modification is found at Tyr-589. (R)-carnitine contacts are provided by Tyr-589 and Thr-602. Residue Thr-604 is modified to Phosphothreonine. Residues Ser-741 and Ser-747 each carry the phosphoserine modification.

Belongs to the carnitine/choline acetyltransferase family. As to quaternary structure, homohexamer and homotrimer. Identified in a complex that contains at least CPT1A, ACSL1 and VDAC1. Also identified in complexes with ACSL1 and VDAC2 and VDAC3. Interacts with ZDHHC4. In terms of tissue distribution, strong expression in kidney and heart, and lower in liver and skeletal muscle.

The protein resides in the mitochondrion outer membrane. It catalyses the reaction (R)-carnitine + hexadecanoyl-CoA = O-hexadecanoyl-(R)-carnitine + CoA. The enzyme catalyses succinyl-CoA + L-lysyl-[protein] = N(6)-succinyl-L-lysyl-[protein] + CoA + H(+). It participates in lipid metabolism; fatty acid beta-oxidation. Inhibited by malonyl-CoA. Functionally, catalyzes the transfer of the acyl group of long-chain fatty acid-CoA conjugates onto carnitine, an essential step for the mitochondrial uptake of long-chain fatty acids and their subsequent beta-oxidation in the mitochondrion. Also possesses a lysine succinyltransferase activity that can regulate enzymatic activity of substrate proteins such as ENO1 and metabolism independent of its classical carnitine O-palmitoyltransferase activity. Plays an important role in hepatic triglyceride metabolism. Also plays a role in inducible regulatory T-cell (iTreg) differentiation once activated by butyryl-CoA that antagonizes malonyl-CoA-mediated CPT1A repression. Sustains the IFN-I response by recruiting ZDHCC4 to palmitoylate MAVS at the mitochondria leading to MAVS stabilization and activation. Promotes ROS-induced oxidative stress in liver injury via modulation of NFE2L2 and NLRP3-mediated signaling pathways. The chain is Carnitine O-palmitoyltransferase 1, liver isoform from Homo sapiens (Human).